A 388-amino-acid chain; its full sequence is S-adenosylmethionine synthase (388 aa).

ATP is bound at residue H16. Residue D18 coordinates Mg(2+). E44 contacts K(+). Residues E57 and Q100 each coordinate L-methionine. Residues Q100 to R110 are flexible loop. Residues D165–K167, K231–F232, D240, R246–K247, A263, and K267 contribute to the ATP site. D240 lines the L-methionine pocket. K271 is an L-methionine binding site.

It belongs to the AdoMet synthase family. As to quaternary structure, homotetramer; dimer of dimers. The cofactor is Mg(2+). K(+) serves as cofactor.

It is found in the cytoplasm. It catalyses the reaction L-methionine + ATP + H2O = S-adenosyl-L-methionine + phosphate + diphosphate. It functions in the pathway amino-acid biosynthesis; S-adenosyl-L-methionine biosynthesis; S-adenosyl-L-methionine from L-methionine: step 1/1. Catalyzes the formation of S-adenosylmethionine (AdoMet) from methionine and ATP. The overall synthetic reaction is composed of two sequential steps, AdoMet formation and the subsequent tripolyphosphate hydrolysis which occurs prior to release of AdoMet from the enzyme. The sequence is that of S-adenosylmethionine synthase from Psychrobacter arcticus (strain DSM 17307 / VKM B-2377 / 273-4).